Consider the following 382-residue polypeptide: Dual-specificity RNA methyltransferase RlmN (382 aa).

E91 (proton acceptor) is an active-site residue. A Radical SAM core domain is found at 97–339 (ETDRGTLCIS…TTVRKTRGDD (243 aa)). An intrachain disulfide couples C104 to C344. [4Fe-4S] cluster contacts are provided by C111, C115, and C118. Residues 165–166 (GE), S197, 219–221 (SLH), and N301 contribute to the S-adenosyl-L-methionine site. The S-methylcysteine intermediate role is filled by C344.

This sequence belongs to the radical SAM superfamily. RlmN family. The cofactor is [4Fe-4S] cluster.

It is found in the cytoplasm. The catalysed reaction is adenosine(2503) in 23S rRNA + 2 reduced [2Fe-2S]-[ferredoxin] + 2 S-adenosyl-L-methionine = 2-methyladenosine(2503) in 23S rRNA + 5'-deoxyadenosine + L-methionine + 2 oxidized [2Fe-2S]-[ferredoxin] + S-adenosyl-L-homocysteine. It catalyses the reaction adenosine(37) in tRNA + 2 reduced [2Fe-2S]-[ferredoxin] + 2 S-adenosyl-L-methionine = 2-methyladenosine(37) in tRNA + 5'-deoxyadenosine + L-methionine + 2 oxidized [2Fe-2S]-[ferredoxin] + S-adenosyl-L-homocysteine. Functionally, specifically methylates position 2 of adenine 2503 in 23S rRNA and position 2 of adenine 37 in tRNAs. m2A2503 modification seems to play a crucial role in the proofreading step occurring at the peptidyl transferase center and thus would serve to optimize ribosomal fidelity. This is Dual-specificity RNA methyltransferase RlmN from Polaromonas naphthalenivorans (strain CJ2).